Here is a 518-residue protein sequence, read N- to C-terminus: Cyclin-L2 (518 aa).

Cyclin-like stretches follow at residues 81 to 183 and 196 to 280; these read ELIQ…RVLK and KIIV…KILQ. Positions 310–518 are disordered; the sequence is AKGLLPGTAP…DHPGHSRHRR (209 aa). Phosphoserine is present on residues Ser-328, Ser-335, Ser-345, Ser-348, and Ser-366. Residues 382–420 are RS; it reads RSREQSYSRSPSRSASPKRRKSDSGSTSGGSKSQSRSRS. A compositionally biased stretch (low complexity) spans 405–427; sequence SGSTSGGSKSQSRSRSRSDSPPR. Residues 438–450 show a composition bias toward basic and acidic residues; the sequence is SEVRGSRKSKDCK. Residues 455-469 are compositionally biased toward basic residues; the sequence is KPHKSRSRSSSRSRS. Basic and acidic residues-rich tracts occupy residues 470-479 and 487-512; these read RSRERTDNSG and YYRDQRRERSRSYERTGHRYERDHPG.

This sequence belongs to the cyclin family. Cyclin L subfamily. Interacts with CDK11A, CDK11B, CDK12, CDK13 and POLR2A, the hyperphosphorylated C-terminal domain (CTD) of RNA polymerase II. May form a ternary complex with CDK11B and casein kinase II (CKII). Interacts with pre-mRNA-splicing factors, including at least SRSF1, SRSF2 and SRSF7/SLU7. In terms of tissue distribution, widely expressed (at protein level).

It localises to the nucleus speckle. The protein localises to the nucleus. Its subcellular location is the nucleoplasm. Its function is as follows. Involved in pre-mRNA splicing. May induce cell death, possibly by acting on the transcription and RNA processing of apoptosis-related factors. The protein is Cyclin-L2 (Ccnl2) of Mus musculus (Mouse).